Consider the following 318-residue polypeptide: NADH-ubiquinone oxidoreductase chain 1 (318 aa).

The next 8 helical transmembrane spans lie at 3–23 (LINL…LTLL), 69–89 (MLFI…WTPL), 102–122 (MLFI…SGWA), 144–164 (VTLA…TLLS), 171–191 (YIWL…STLA), 222–242 (LFFL…IILF), 253–273 (ELYT…FLWI), and 294–314 (LPLT…LAGI).

This sequence belongs to the complex I subunit 1 family. In terms of assembly, core subunit of respiratory chain NADH dehydrogenase (Complex I) which is composed of 45 different subunits.

It is found in the mitochondrion inner membrane. It catalyses the reaction a ubiquinone + NADH + 5 H(+)(in) = a ubiquinol + NAD(+) + 4 H(+)(out). Its function is as follows. Core subunit of the mitochondrial membrane respiratory chain NADH dehydrogenase (Complex I) which catalyzes electron transfer from NADH through the respiratory chain, using ubiquinone as an electron acceptor. Essential for the catalytic activity and assembly of complex I. This Murina florium (Flores tube-nosed bat) protein is NADH-ubiquinone oxidoreductase chain 1 (MT-ND1).